The following is a 170-amino-acid chain: Adenine phosphoribosyltransferase (170 aa).

The protein belongs to the purine/pyrimidine phosphoribosyltransferase family. Homodimer.

It localises to the cytoplasm. It catalyses the reaction AMP + diphosphate = 5-phospho-alpha-D-ribose 1-diphosphate + adenine. The protein operates within purine metabolism; AMP biosynthesis via salvage pathway; AMP from adenine: step 1/1. Catalyzes a salvage reaction resulting in the formation of AMP, that is energically less costly than de novo synthesis. The protein is Adenine phosphoribosyltransferase of Lysinibacillus sphaericus (strain C3-41).